Consider the following 573-residue polypeptide: Urease subunit alpha (573 aa).

Residues 136-573 (GGIDCHVHFI…LPMAQRYFLF (438 aa)) form the Urease domain. The Ni(2+) site is built by histidine 141, histidine 143, and lysine 224. Lysine 224 carries the N6-carboxylysine modification. A substrate-binding site is contributed by histidine 226. Residues histidine 253 and histidine 279 each coordinate Ni(2+). The Proton donor role is filled by histidine 327. Aspartate 367 is a Ni(2+) binding site.

This sequence belongs to the metallo-dependent hydrolases superfamily. Urease alpha subunit family. Heterotrimer of UreA (gamma), UreB (beta) and UreC (alpha) subunits. Three heterotrimers associate to form the active enzyme. Ni cation is required as a cofactor. Post-translationally, carboxylation allows a single lysine to coordinate two nickel ions.

It localises to the cytoplasm. It carries out the reaction urea + 2 H2O + H(+) = hydrogencarbonate + 2 NH4(+). It participates in nitrogen metabolism; urea degradation; CO(2) and NH(3) from urea (urease route): step 1/1. This is Urease subunit alpha from Rhodococcus opacus (strain B4).